Reading from the N-terminus, the 335-residue chain is Syntaxin-18 (335 aa).

At 1–309 the chain is on the cytoplasmic side; it reads MAVDITLLFR…EDIREAIKNN (309 aa). Residues 168–208 are compositionally biased toward basic and acidic residues; it reads KLEPEPNTKTRESTSSEKVSRSPSKDSEENPATEERPEKIL. The segment at 168-226 is disordered; the sequence is KLEPEPNTKTRESTSSEKVSRSPSKDSEENPATEERPEKILAETQPELGTWGDGKGEDE. The t-SNARE coiled-coil homology domain maps to 243–305; sequence IGEMNSLFDE…KEGNEDIREA (63 aa). A helical; Anchor for type IV membrane protein transmembrane segment spans residues 310-330; sequence AGFRVWILFFLVMCSFSLLFL. Residues 331-335 are Vesicular-facing; sequence DWYDS.

The protein belongs to the syntaxin family. As to quaternary structure, component of a SNARE complex consisting of STX18, USE1L, BNIP1/SEC20L, and SEC22B. RINT1/TIP20L and ZW10 are associated with the complex through interaction with BNIP1/SEC20L. Interacts directly with USE1L and BNIP1/SEC20L.

Its subcellular location is the endoplasmic reticulum membrane. The protein localises to the golgi apparatus membrane. Its function is as follows. Syntaxin that may be involved in targeting and fusion of Golgi-derived retrograde transport vesicles with the ER. The chain is Syntaxin-18 (STX18) from Pongo abelii (Sumatran orangutan).